The chain runs to 146 residues: Large ribosomal subunit protein uL15 (146 aa).

The tract at residues 1-54 (MTIKLHDLRPAPGSKTPRTRVGRGEGSKGKTAGRGTKGTKARKQVPTTFEGGQM) is disordered.

It belongs to the universal ribosomal protein uL15 family. In terms of assembly, part of the 50S ribosomal subunit.

Binds to the 23S rRNA. This Mycobacterium ulcerans (strain Agy99) protein is Large ribosomal subunit protein uL15.